The chain runs to 355 residues: Protein RecA (355 aa).

ATP is bound at residue 72 to 79 (GPESSGKT).

The protein belongs to the RecA family.

The protein localises to the cytoplasm. In terms of biological role, can catalyze the hydrolysis of ATP in the presence of single-stranded DNA, the ATP-dependent uptake of single-stranded DNA by duplex DNA, and the ATP-dependent hybridization of homologous single-stranded DNAs. It interacts with LexA causing its activation and leading to its autocatalytic cleavage. The protein is Protein RecA of Wolbachia pipientis subsp. Culex pipiens (strain wPip).